Here is a 443-residue protein sequence, read N- to C-terminus: Exodeoxyribonuclease 7 large subunit (443 aa).

The protein belongs to the XseA family. As to quaternary structure, heterooligomer composed of large and small subunits.

The protein localises to the cytoplasm. It carries out the reaction Exonucleolytic cleavage in either 5'- to 3'- or 3'- to 5'-direction to yield nucleoside 5'-phosphates.. Its function is as follows. Bidirectionally degrades single-stranded DNA into large acid-insoluble oligonucleotides, which are then degraded further into small acid-soluble oligonucleotides. The sequence is that of Exodeoxyribonuclease 7 large subunit from Legionella pneumophila (strain Lens).